A 368-amino-acid polypeptide reads, in one-letter code: 2-deoxy-scyllo-inosose synthase (368 aa).

NAD(+) is bound by residues Asp-42, 72–75, 104–108, 128–129, 139–141, 150–151, and Gln-176; these read EEYK, GLTGN, TT, SIK, and KN. Lys-141 is a catalytic residue. Co(2+) is bound at residue Glu-183. The active site involves Glu-243. Co(2+) is bound by residues His-246 and His-262.

The protein belongs to the sugar phosphate cyclases superfamily. DOI synthase family. In terms of assembly, was isolated as a heterodimeric enzyme comprising of BtrC and a smaller polypeptide further identified as PdxT by sequence homology. Homodimer in solution. It depends on NAD(+) as a cofactor. Co(2+) serves as cofactor.

The enzyme catalyses D-glucose 6-phosphate = 2-deoxy-L-scyllo-inosose + phosphate. Its pathway is metabolic intermediate biosynthesis; 2-deoxystreptamine biosynthesis; 2-deoxystreptamine from D-glucose 6-phosphate: step 1/4. It participates in antibiotic biosynthesis; butirosin biosynthesis. Its activity is regulated as follows. Strongly inhibited by EDTA, zinc and Cu(2+). Its function is as follows. Catalyzes the intramolecular carbocycle formation from D-glucose-6-phosphate to 2-deoxy-scyllo-inosose (DOI). The polypeptide is 2-deoxy-scyllo-inosose synthase (btrC) (Niallia circulans (Bacillus circulans)).